A 485-amino-acid chain; its full sequence is MSLFDHSVSELHKKLNNKEISVTDLVEESYKRIADVEDNVKAFLTLDEENARAKAKELDAKIGAEDNGLLFGMPIGVKDNIVTNGLRTTCASKMLANFDPIYDATVVQKLKAADTITIGKLNMDEFAMGSSNENSGFYATKNPWNLDYVPGGSSGGSAAAVAAGEVLFSLGSDTGGSIRQPAAYCGVVGLKPTYGRVSRYGLVAFASSLDQIGPITRTVEDNAYLLQAISGLDRMDATSANVEVGNYLAGLTGDVKGLRIAVPKEYLGEGVGEEARESVLAALKVLEGMGATWEEVSLPHSKYALATYYLLSSSEASANLSRFDGVRYGVRSDNVNNLLDLYKNTRSEGFGDEVKRRIMLGTFALSSGYYDAYYKKAQQVRTLIKNDFENVFANYDVIIGPTTPTPAFKVGEKVDDPMTMYANDILTIPVNLAGVPAISVPCGFGANNMPLGLQIIGKHFDEATIYRVAHAFEQATDYHTKKASL.

Catalysis depends on charge relay system residues Lys78 and Ser153. Ser177 serves as the catalytic Acyl-ester intermediate.

Belongs to the amidase family. GatA subfamily. As to quaternary structure, heterotrimer of A, B and C subunits.

The catalysed reaction is L-glutamyl-tRNA(Gln) + L-glutamine + ATP + H2O = L-glutaminyl-tRNA(Gln) + L-glutamate + ADP + phosphate + H(+). Functionally, allows the formation of correctly charged Gln-tRNA(Gln) through the transamidation of misacylated Glu-tRNA(Gln) in organisms which lack glutaminyl-tRNA synthetase. The reaction takes place in the presence of glutamine and ATP through an activated gamma-phospho-Glu-tRNA(Gln). The sequence is that of Glutamyl-tRNA(Gln) amidotransferase subunit A from Bacillus cereus (strain Q1).